The sequence spans 186 residues: Transcriptional repressor NrdR (186 aa).

A zinc finger lies at 3 to 34 (CPFCRHPDSRVVDSREAEEGAAIRRRRSCPAC). Positions 46-136 (LRVRKRSGAT…VYLAFESLGD (91 aa)) constitute an ATP-cone domain. The segment at 149–169 (AGGGEPPVAGKPTTMPAATGA) is disordered.

Belongs to the NrdR family. The cofactor is Zn(2+).

Negatively regulates transcription of bacterial ribonucleotide reductase nrd genes and operons by binding to NrdR-boxes. This is Transcriptional repressor NrdR from Parafrankia sp. (strain EAN1pec).